The primary structure comprises 74 residues: UPF0435 protein ABC2298 (74 aa).

Belongs to the UPF0435 family.

In Shouchella clausii (strain KSM-K16) (Alkalihalobacillus clausii), this protein is UPF0435 protein ABC2298.